Reading from the N-terminus, the 144-residue chain is Maximins 6/Hv (144 aa).

The signal sequence occupies residues Met-1–Ala-18. The propeptide occupies Arg-19–Arg-43. Asn-70 is subject to Asparagine amide. The propeptide occupies Thr-74–Arg-123. Residue Ile-143 is modified to Isoleucine amide.

Belongs to the bombinin family. In terms of tissue distribution, expressed by the skin glands.

The protein resides in the secreted. In terms of biological role, shows antimicrobial activity against bacteria and against the fungus C.albicans. It has little hemolytic activity. Shows antimicrobial activity against bacteria and against the fungus C.albicans. Shows strong hemolytic activity. The polypeptide is Maximins 6/Hv (Bombina maxima (Giant fire-bellied toad)).